Reading from the N-terminus, the 371-residue chain is Neutral protease 2 homolog MGYG_03465 (371 aa).

The N-terminal stretch at Met-1–Ala-19 is a signal peptide. The propeptide occupies Tyr-20–Arg-188. Intrachain disulfides connect Cys-196–Cys-267 and Cys-274–Cys-292. His-316 lines the Zn(2+) pocket. Glu-317 is a catalytic residue. Residues His-320 and Asp-331 each contribute to the Zn(2+) site.

It belongs to the peptidase M35 family. Requires Zn(2+) as cofactor.

It is found in the secreted. It carries out the reaction Preferential cleavage of bonds with hydrophobic residues in P1'. Also 3-Asn-|-Gln-4 and 8-Gly-|-Ser-9 bonds in insulin B chain.. Secreted metalloproteinase that allows assimilation of proteinaceous substrates. Shows high activities on basic nuclear substrates such as histone and protamine. May be involved in virulence. In Arthroderma gypseum (strain ATCC MYA-4604 / CBS 118893) (Microsporum gypseum), this protein is Neutral protease 2 homolog MGYG_03465.